The chain runs to 446 residues: Ribosomal protein uS12 methylthiotransferase RimO (446 aa).

In terms of domain architecture, MTTase N-terminal spans 9–121 (PKVGFVSLGC…VLDAIHAALP (113 aa)). Residues C18, C54, C83, C152, C156, and C159 each contribute to the [4Fe-4S] cluster site. The region spanning 138–375 (LTPPHYAYLK…MAVQEAISRQ (238 aa)) is the Radical SAM core domain. The region spanning 378 to 445 (QRRVGQRQRV…AHDLYGMVVS (68 aa)) is the TRAM domain.

This sequence belongs to the methylthiotransferase family. RimO subfamily. It depends on [4Fe-4S] cluster as a cofactor.

The protein resides in the cytoplasm. The catalysed reaction is L-aspartate(89)-[ribosomal protein uS12]-hydrogen + (sulfur carrier)-SH + AH2 + 2 S-adenosyl-L-methionine = 3-methylsulfanyl-L-aspartate(89)-[ribosomal protein uS12]-hydrogen + (sulfur carrier)-H + 5'-deoxyadenosine + L-methionine + A + S-adenosyl-L-homocysteine + 2 H(+). Functionally, catalyzes the methylthiolation of an aspartic acid residue of ribosomal protein uS12. In Acidithiobacillus ferrooxidans (strain ATCC 23270 / DSM 14882 / CIP 104768 / NCIMB 8455) (Ferrobacillus ferrooxidans (strain ATCC 23270)), this protein is Ribosomal protein uS12 methylthiotransferase RimO.